The primary structure comprises 279 residues: Protoheme IX farnesyltransferase (279 aa).

9 helical membrane passes run 1-21 (MIKP…FFLA), 29-49 (IFFL…CILN), 79-99 (ILFF…YIYI), 101-121 (FLCT…YSYL), 128-148 (FSTF…YVAV), 156-176 (CTIL…SIII), 200-220 (IIFI…LYFF), 225-245 (FFYF…SFLS), and 254-274 (IWSR…SFLM).

It belongs to the UbiA prenyltransferase family. Protoheme IX farnesyltransferase subfamily.

Its subcellular location is the cell membrane. The catalysed reaction is heme b + (2E,6E)-farnesyl diphosphate + H2O = Fe(II)-heme o + diphosphate. It functions in the pathway porphyrin-containing compound metabolism; heme O biosynthesis; heme O from protoheme: step 1/1. Its function is as follows. Converts heme B (protoheme IX) to heme O by substitution of the vinyl group on carbon 2 of heme B porphyrin ring with a hydroxyethyl farnesyl side group. The polypeptide is Protoheme IX farnesyltransferase (Buchnera aphidicola subsp. Cinara cedri (strain Cc)).